Reading from the N-terminus, the 257-residue chain is A-factor type gamma-butyrolactone 1'-reductase (1S-forming) (257 aa).

Tyr161 (proton acceptor) is an active-site residue.

Belongs to the short-chain dehydrogenases/reductases (SDR) family. In terms of assembly, homodimer.

It catalyses the reaction a (3R,4R)-3-[(1S)-1-hydroxyalkyl]-4-(hydroxymethyl)oxolan-2-one + NADP(+) = a (3R,4R)-3-alkanoyl-4-(hydroxymethyl)oxolan-2-one + NADPH + H(+). Functionally, involved in the biosynthesis of virginiae butanolide (VB), which regulates the production of antibiotic virginiamycin. Catalyzes the reduction of 6-dehydro-VB-A to VB-A, the last catalytic step in VB biosynthesis. In vitro, can use various synthetic A-factor-type analogs. This chain is A-factor type gamma-butyrolactone 1'-reductase (1S-forming), found in Streptomyces virginiae (Streptomyces cinnamonensis).